Here is a 321-residue protein sequence, read N- to C-terminus: Protein translocase subunit SecF (321 aa).

6 helical membrane-spanning segments follow: residues 23–43 (VWLI…FSWT), 158–178 (LQTT…YISI), 189–209 (LLAL…LGII), 217–237 (LFAV…VVVF), 258–280 (FAVS…PLIA), and 290–312 (YWFA…ALVP).

The protein belongs to the SecD/SecF family. SecF subfamily. In terms of assembly, forms a complex with SecD. Part of the essential Sec protein translocation apparatus which comprises SecA, SecYEG and auxiliary proteins SecDF. Other proteins may also be involved.

Its subcellular location is the cell inner membrane. In terms of biological role, part of the Sec protein translocase complex. Interacts with the SecYEG preprotein conducting channel. SecDF uses the proton motive force (PMF) to complete protein translocation after the ATP-dependent function of SecA. Probably participates in protein translocation into and across both the cytoplasmic and thylakoid membranes in cyanobacterial cells. This Prochlorococcus marinus (strain SARG / CCMP1375 / SS120) protein is Protein translocase subunit SecF.